The sequence spans 196 residues: 3-isopropylmalate dehydratase small subunit (196 aa).

Belongs to the LeuD family. LeuD type 1 subfamily. In terms of assembly, heterodimer of LeuC and LeuD.

It catalyses the reaction (2R,3S)-3-isopropylmalate = (2S)-2-isopropylmalate. The protein operates within amino-acid biosynthesis; L-leucine biosynthesis; L-leucine from 3-methyl-2-oxobutanoate: step 2/4. Its function is as follows. Catalyzes the isomerization between 2-isopropylmalate and 3-isopropylmalate, via the formation of 2-isopropylmaleate. The protein is 3-isopropylmalate dehydratase small subunit of Streptococcus thermophilus (strain CNRZ 1066).